The chain runs to 434 residues: Tol-Pal system protein TolB (434 aa).

The signal sequence occupies residues 1–24 (MKFSAYLTTLFIVLFSLFIQTVQA).

The protein belongs to the TolB family. As to quaternary structure, the Tol-Pal system is composed of five core proteins: the inner membrane proteins TolA, TolQ and TolR, the periplasmic protein TolB and the outer membrane protein Pal. They form a network linking the inner and outer membranes and the peptidoglycan layer.

The protein localises to the periplasm. Part of the Tol-Pal system, which plays a role in outer membrane invagination during cell division and is important for maintaining outer membrane integrity. The polypeptide is Tol-Pal system protein TolB (Histophilus somni (strain 129Pt) (Haemophilus somnus)).